A 146-amino-acid chain; its full sequence is Mediator of RNA polymerase II transcription subunit 10 (146 aa).

The protein belongs to the Mediator complex subunit 10 family. Component of the Mediator complex.

The protein localises to the nucleus. Component of the Mediator complex, a coactivator involved in the regulated transcription of nearly all RNA polymerase II-dependent genes. Mediator functions as a bridge to convey information from gene-specific regulatory proteins to the basal RNA polymerase II transcription machinery. Mediator is recruited to promoters by direct interactions with regulatory proteins and serves as a scaffold for the assembly of a functional preinitiation complex with RNA polymerase II and the general transcription factors. The sequence is that of Mediator of RNA polymerase II transcription subunit 10 (NUT2) from Scheffersomyces stipitis (strain ATCC 58785 / CBS 6054 / NBRC 10063 / NRRL Y-11545) (Yeast).